Reading from the N-terminus, the 392-residue chain is Frizzled-9 (392 aa).

At 1-35 (ACDNPEKFQYVEKSLSCAPRCSPGVDVYWSREDKD) the chain is on the extracellular side. Residues 36-56 (FAFVWMAVWSTLCFVSTAFTV) traverse the membrane as a helical segment. Residues 57 to 72 (LTFLLDPHRFQYPERP) are Cytoplasmic-facing. The chain crosses the membrane as a helical span at residues 73–93 (IIFLSMCYNVYSVAFIIRSVA). At 94 to 119 (GAETIACDRENGELYIIQEGLESTGC) the chain is on the extracellular side. The chain crosses the membrane as a helical span at residues 120–140 (TIVFLILYYFGMASSLWWVVL). The Cytoplasmic portion of the chain corresponds to 141 to 161 (TLTWFLAAGKKWGHEAIEAHS). Residues 162-182 (SYFHMAAWGIPAMKTIVILTM) traverse the membrane as a helical segment. At 183-206 (RKVAGDELTGLCYVGSMDVSALTG) the chain is on the extracellular side. The helical transmembrane segment at 207 to 227 (FVLIPLSCYLVVGTSFILTGF) threads the bilayer. At 228 to 253 (VALFHIRKIMKTGGTNTEKLEKLMVK) the chain is on the cytoplasmic side. A helical membrane pass occupies residues 254 to 274 (IGVFSILYTVPATCVIVCYFY). Residues 275–312 (ERLNVDYWNLRALERACVPLPGRRAADCSLEASVPTVA) are Extracellular-facing. The helical transmembrane segment at 313–333 (VFMLKIFMSLVVGITSGVWVW) threads the bilayer. Over 334–392 (SSKTLQTWQSLCNRKLGVRTRGKPCSGVSCGGVHCHYKAPTVMLHMTKTDPYLDNPTHV) the chain is Cytoplasmic. The Lys-Thr-X-X-X-Trp motif, mediates interaction with the PDZ domain of Dvl family members signature appears at 336 to 341 (KTLQTW). Positions 390-392 (THV) match the PDZ-binding motif.

It belongs to the G-protein coupled receptor Fz/Smo family.

The protein localises to the cell membrane. In terms of biological role, receptor for WNT2 that is coupled to the beta-catenin canonical signaling pathway, which leads to the activation of disheveled proteins, inhibition of GSK-3 kinase, nuclear accumulation of beta-catenin and activation of Wnt target genes. The sequence is that of Frizzled-9 (FZD9) from Gallus gallus (Chicken).